Consider the following 401-residue polypeptide: MGILGIIVEYNPFHNGHLYHLQTSKELTKCDYTIAVMSGNFVQRGEPAIVDKWKRTQMALKAGIDLVIELPVVYATSTAENFAYGAVKLLDSLKIVDCFSFGSEKGDLNELTKIAEILLEEPIYYRKALKEYLKSGITFAKARELALQKVINNNEIEKILQTSNNILAIEYLKSLKKIGSSITPFTIKRKGSLYTSLELKGEFASASSIRKHIFEKGLEGLEKYIPDFTKEILQSSFEKKQGPVSLEEFSNILIYLLRNHIPLNHIFDVSEGLENKIYKASYKTNNVEELMKLVKSKRYTESRIRHILIHLLLNIDKQIFKEFDGPNYIRVLGFNEKGKEMLREIKKKSPLPIITKVSQYKEKLSNTKMFEKDLFATDVYTLAYKNSSIAGLDFIHPLIKL.

ATP is bound by residues 7–20, glycine 102, asparagine 164, and arginine 189; that span reads IVEY…HLYH.

Belongs to the TmcAL family.

The protein resides in the cytoplasm. The catalysed reaction is cytidine(34) in elongator tRNA(Met) + acetate + ATP = N(4)-acetylcytidine(34) in elongator tRNA(Met) + AMP + diphosphate. Its function is as follows. Catalyzes the formation of N(4)-acetylcytidine (ac(4)C) at the wobble position of elongator tRNA(Met), using acetate and ATP as substrates. First activates an acetate ion to form acetyladenylate (Ac-AMP) and then transfers the acetyl group to tRNA to form ac(4)C34. The chain is tRNA(Met) cytidine acetate ligase from Thermoanaerobacter pseudethanolicus (strain ATCC 33223 / 39E) (Clostridium thermohydrosulfuricum).